A 278-amino-acid chain; its full sequence is HTH-type transcriptional activator RhaS (278 aa).

One can recognise an HTH araC/xylS-type domain in the interval 174–272 (NLLLAWLEDH…NWSPRDIRQG (99 aa)). 2 consecutive DNA-binding regions (H-T-H motif) follow at residues 191–212 (DAVA…KQQT) and 239–262 (VTDI…RREF).

As to quaternary structure, binds DNA as a dimer.

The protein localises to the cytoplasm. Functionally, activates expression of the rhaBAD and rhaT operons. This is HTH-type transcriptional activator RhaS from Escherichia coli (strain SE11).